A 485-amino-acid polypeptide reads, in one-letter code: Cobyric acid synthase (485 aa).

The GATase cobBQ-type domain maps to 248–435 (RLKVAVAVPP…LHGLFESPAA (188 aa)). The active-site Nucleophile is the C329. H427 is an active-site residue.

Belongs to the CobB/CobQ family. CobQ subfamily.

It functions in the pathway cofactor biosynthesis; adenosylcobalamin biosynthesis. Its function is as follows. Catalyzes amidations at positions B, D, E, and G on adenosylcobyrinic A,C-diamide. NH(2) groups are provided by glutamine, and one molecule of ATP is hydrogenolyzed for each amidation. This is Cobyric acid synthase from Azotobacter vinelandii (strain DJ / ATCC BAA-1303).